Consider the following 793-residue polypeptide: Toll-like receptor 2 type-1 (793 aa).

Residues 1–25 form the signal peptide; it reads MFNQSKQKPTMKLMWQAWLIYTALA. Residues 26–597 lie on the Extracellular side of the membrane; the sequence is AHLPEEQALR…QLSLMECHRS (572 aa). Residues cysteine 41 and cysteine 47 are joined by a disulfide bond. The N-linked (GlcNAc...) asparagine glycan is linked to asparagine 48. 6 LRR repeats span residues 64 to 85, 88 to 109, 112 to 133, 136 to 157, 161 to 182, and 185 to 206; these read KITV…DLQK, NLRT…SFGS, KLEL…WFGP, SLQH…SPFS, NLSS…NFEG, and FLNT…SLKS. The N-linked (GlcNAc...) asparagine glycan is linked to asparagine 120. N-linked (GlcNAc...) asparagine glycosylation is found at asparagine 161, asparagine 195, asparagine 254, and asparagine 325. Cysteine 362 and cysteine 391 form a disulfide bridge. 7 LRR repeats span residues 370–391, 397–418, 423–444, 446–467, 468–486, 487–508, and 509–530; these read SLLY…ETIC, SLQT…ARYI, KLIN…CEWP, NLKY…IPST, LEVL…LQLP, FLKE…TDIP, and NLVA…EFES. Residue asparagine 402 is glycosylated (N-linked (GlcNAc...) asparagine). Cysteine 441 and cysteine 463 are joined by a disulfide. Asparagine 451 carries N-linked (GlcNAc...) asparagine glycosylation. The region spanning 542-596 is the LRRCT domain; it reads NNFICSCEFLSFIHHEAGIAQVLVGWPESYICDSPLTVRGAQVGSVQLSLMECHR. The helical transmembrane segment at 598–618 threads the bilayer; sequence LLVSLICTLVFLFILILVVVG. Topologically, residues 619–793 are cytoplasmic; that stretch reads YKYHAVWYMR…WENLKAALKS (175 aa). Positions 648 to 791 constitute a TIR domain; the sequence is ICYDAFVSYS…MFWENLKAAL (144 aa).

Belongs to the Toll-like receptor family. Binds MYD88 (via TIR domain). In terms of processing, N-glycosylated. TLR2-1 is more heavily glycosylated than TLR2-2. As to expression, highly expressed in ovary. Detected at lower levels in heart, lung, gizzard and testis.

It is found in the membrane. In terms of biological role, participates in the innate immune response to microbial agents. Acts via MYD88 and TRAF6, leading to NF-kappa-B activation, cytokine secretion and the inflammatory response. Does not respond to LPS and responds with less ability than TLR2-2 to mycoplasmal macrophage-activating lipopeptide-2kD (MALP-2). This is Toll-like receptor 2 type-1 (TLR2-1) from Gallus gallus (Chicken).